The chain runs to 311 residues: Glycine--tRNA ligase alpha subunit (311 aa).

This sequence belongs to the class-II aminoacyl-tRNA synthetase family. In terms of assembly, tetramer of two alpha and two beta subunits.

Its subcellular location is the cytoplasm. The catalysed reaction is tRNA(Gly) + glycine + ATP = glycyl-tRNA(Gly) + AMP + diphosphate. This is Glycine--tRNA ligase alpha subunit from Bradyrhizobium diazoefficiens (strain JCM 10833 / BCRC 13528 / IAM 13628 / NBRC 14792 / USDA 110).